The primary structure comprises 443 residues: MSKLNMTPREIVAYLDEYIIGQKEAKKSIAIAFRNRYRRLQLEKSLQEEITPKNILMIGSTGVGKTEIARRIAKIMELPFVKVEASKYTEVGFVGRDVESMVRDLVNNSVLLVENEHKEKLKDKIEEAVIEKIAKKLLPPLPNGVSEEKKQEYANSLLKMQQRIAQGELDNREIEIEVRKKSIEIDSNVPPEILRVQENLIKVFHKEQDKVKKTLSVKEAKEALKAEISDTLLDGEAIKMEGLKRAESSGVIFIDEIDKIAVSSKEGSRQDPSKEGVQRDLLPIVEGSVVNTKYGSIKTEHILFIAAGAFHLSKPSDLIPELQGRFPLRVELENLTEEIMYMILTQTKTSIIKQYQALLKVEGVEIAFEDDAIKELAKLSYNANQKSEDIGARRLHTTIEKVLEDISFEAEDYSGQKVTITKELVQSKLEDLVADENLVKYIL.

Residues I20, 62–67, D255, E321, and R393 each bind ATP; that span reads GVGKTE.

This sequence belongs to the ClpX chaperone family. HslU subfamily. In terms of assembly, a double ring-shaped homohexamer of HslV is capped on each side by a ring-shaped HslU homohexamer. The assembly of the HslU/HslV complex is dependent on binding of ATP.

The protein resides in the cytoplasm. Its function is as follows. ATPase subunit of a proteasome-like degradation complex; this subunit has chaperone activity. The binding of ATP and its subsequent hydrolysis by HslU are essential for unfolding of protein substrates subsequently hydrolyzed by HslV. HslU recognizes the N-terminal part of its protein substrates and unfolds these before they are guided to HslV for hydrolysis. The protein is ATP-dependent protease ATPase subunit HslU of Helicobacter pylori (strain G27).